A 177-amino-acid chain; its full sequence is Calcineurin subunit B (177 aa).

4 consecutive EF-hand domains span residues 25 to 60 (KEIK…AVNP), 62 to 92 (VKRV…FNAQ), 94 to 129 (DKQR…MVGN), and 135 to 170 (QLQQ…QDLE). Ca(2+)-binding residues include aspartate 38, aspartate 40, asparagine 42, threonine 44, glutamate 49, aspartate 70, asparagine 72, aspartate 74, serine 76, glutamate 81, aspartate 107, aspartate 109, aspartate 111, tyrosine 113, glutamate 118, aspartate 148, aspartate 150, aspartate 152, lysine 154, and glutamate 159.

Belongs to the calcineurin regulatory subunit family. As to quaternary structure, composed of a catalytic subunit (A) and a regulatory subunit (B).

In terms of biological role, regulatory subunit of calcineurin, a calcium-dependent, calmodulin stimulated protein phosphatase. Confers calcium sensitivity. The chain is Calcineurin subunit B (CNB1) from Naegleria gruberi (Amoeba).